The chain runs to 302 residues: tRNA pseudouridine synthase B (302 aa).

Catalysis depends on Asp45, which acts as the Nucleophile.

The protein belongs to the pseudouridine synthase TruB family. Type 1 subfamily.

The enzyme catalyses uridine(55) in tRNA = pseudouridine(55) in tRNA. In terms of biological role, responsible for synthesis of pseudouridine from uracil-55 in the psi GC loop of transfer RNAs. This is tRNA pseudouridine synthase B from Francisella tularensis subsp. tularensis (strain FSC 198).